The sequence spans 673 residues: UvrABC system protein B (673 aa).

Residues 26-183 (ANFEAGLAKQ…RHLTDLQYTR (158 aa)) enclose the Helicase ATP-binding domain. 39 to 46 (GVTGSGKT) is a binding site for ATP. Positions 92 to 115 (YYDYYQPEAYVPSSDTFIEKDSSI) match the Beta-hairpin motif. The 167-residue stretch at 431-597 (QVDDLMSEIH…SVERPISDIM (167 aa)) folds into the Helicase C-terminal domain. A disordered region spans residues 601–631 (REDAAEKKSGKGRSKSRQVAEETPDYRAMKP). Over residues 618 to 630 (QVAEETPDYRAMK) the composition is skewed to basic and acidic residues. The 36-residue stretch at 635–670 (AGKLKSLEQKMYQHAKDLEFEAAAQIRDQIQKLKTA) folds into the UVR domain.

Belongs to the UvrB family. As to quaternary structure, forms a heterotetramer with UvrA during the search for lesions. Interacts with UvrC in an incision complex.

It localises to the cytoplasm. Its function is as follows. The UvrABC repair system catalyzes the recognition and processing of DNA lesions. A damage recognition complex composed of 2 UvrA and 2 UvrB subunits scans DNA for abnormalities. Upon binding of the UvrA(2)B(2) complex to a putative damaged site, the DNA wraps around one UvrB monomer. DNA wrap is dependent on ATP binding by UvrB and probably causes local melting of the DNA helix, facilitating insertion of UvrB beta-hairpin between the DNA strands. Then UvrB probes one DNA strand for the presence of a lesion. If a lesion is found the UvrA subunits dissociate and the UvrB-DNA preincision complex is formed. This complex is subsequently bound by UvrC and the second UvrB is released. If no lesion is found, the DNA wraps around the other UvrB subunit that will check the other stand for damage. This Xanthomonas oryzae pv. oryzae (strain MAFF 311018) protein is UvrABC system protein B.